Here is a 24-residue protein sequence, read N- to C-terminus: Sperm protamine P3 (24 aa).

The interval 1–24 (RRRRRRRRHRRRRGRRGRRSRGRR) is disordered.

In terms of tissue distribution, testis.

It localises to the nucleus. It is found in the chromosome. Protamines substitute for histones in the chromatin of sperm during the haploid phase of spermatogenesis. They compact sperm DNA into a highly condensed, stable and inactive complex. This is Sperm protamine P3 from Octopus vulgaris (Common octopus).